The chain runs to 74 residues: MPLPKISEARELSDERLVEEITAVKKQLFQLRLQKATRQLDKPHQFRHARHRLAQLLTVEGERKRAAATQSPQE.

The protein belongs to the universal ribosomal protein uL29 family.

This Nostoc sp. (strain PCC 7120 / SAG 25.82 / UTEX 2576) protein is Large ribosomal subunit protein uL29.